Reading from the N-terminus, the 161-residue chain is Cyclic pyranopterin monophosphate synthase (161 aa).

Residues 75-77 (LCH) and 113-114 (ME) contribute to the substrate site. The active site involves Asp128.

It belongs to the MoaC family. Homohexamer; trimer of dimers.

It catalyses the reaction (8S)-3',8-cyclo-7,8-dihydroguanosine 5'-triphosphate = cyclic pyranopterin phosphate + diphosphate. It functions in the pathway cofactor biosynthesis; molybdopterin biosynthesis. Catalyzes the conversion of (8S)-3',8-cyclo-7,8-dihydroguanosine 5'-triphosphate to cyclic pyranopterin monophosphate (cPMP). This is Cyclic pyranopterin monophosphate synthase from Citrobacter koseri (strain ATCC BAA-895 / CDC 4225-83 / SGSC4696).